The chain runs to 667 residues: Primary amine oxidase (667 aa).

The signal sequence occupies residues 1–18; sequence KFALFSVLTLLSFHAVFS. Asn149 is a glycosylation site (N-linked (GlcNAc...) asparagine). Cys155 and Cys176 are joined by a disulfide. The tract at residues 216–246 is disordered; it reads PTAENTEYQVSKQSPPFGPKQHSLTSHQPQG. Positions 218–229 are enriched in polar residues; the sequence is AENTEYQVSKQS. N-linked (GlcNAc...) asparagine glycosylation occurs at Asn252. 316–327 contributes to the substrate binding site; the sequence is FFDSGEFGFGLS. Asp318 serves as the catalytic Proton acceptor. Cys337 and Cys363 form a disulfide bridge. Residue Asn382 is glycosylated (N-linked (GlcNAc...) asparagine). 402-407 is a substrate binding site; the sequence is VGNYDN. Tyr405 acts as the Schiff-base intermediate with substrate; via topaquinone in catalysis. 2',4',5'-topaquinone is present on Tyr405. Positions 460 and 462 each coordinate Cu cation. Mn(2+)-binding residues include Asp469, Phe470, and Asp471. A glycan (N-linked (GlcNAc...) asparagine) is linked at Asn576. Asp610 and Ile611 together coordinate Mn(2+). Residue His621 participates in Cu cation binding.

The protein belongs to the copper/topaquinone oxidase family. In terms of assembly, homodimer. Cu cation serves as cofactor. Requires Zn(2+) as cofactor. The cofactor is L-topaquinone. It depends on Mn(2+) as a cofactor. In terms of processing, glycosylated; contains two carbohydrate chains per monomer. Topaquinone (TPQ) is generated by copper-dependent autoxidation of a specific tyrosyl residue.

It catalyses the reaction a primary methyl amine + O2 + H2O = an aldehyde + H2O2 + NH4(+). The protein is Primary amine oxidase of Lens culinaris (Lentil).